The chain runs to 203 residues: ATP phosphoribosyltransferase (203 aa).

It belongs to the ATP phosphoribosyltransferase family. Short subfamily. As to quaternary structure, heteromultimer composed of HisG and HisZ subunits.

The protein localises to the cytoplasm. It carries out the reaction 1-(5-phospho-beta-D-ribosyl)-ATP + diphosphate = 5-phospho-alpha-D-ribose 1-diphosphate + ATP. Its pathway is amino-acid biosynthesis; L-histidine biosynthesis; L-histidine from 5-phospho-alpha-D-ribose 1-diphosphate: step 1/9. In terms of biological role, catalyzes the condensation of ATP and 5-phosphoribose 1-diphosphate to form N'-(5'-phosphoribosyl)-ATP (PR-ATP). Has a crucial role in the pathway because the rate of histidine biosynthesis seems to be controlled primarily by regulation of HisG enzymatic activity. This Campylobacter fetus subsp. fetus (strain 82-40) protein is ATP phosphoribosyltransferase.